Consider the following 477-residue polypeptide: ATP-dependent rRNA helicase RRP3 (477 aa).

The tract at residues 1–22 (MSVKVDGMINKKSKTHSKKLDA) is disordered. The short motif at 65-93 (KSFNELKLIPELLEAIQQMKFTKPTPIQS) is the Q motif element. The Helicase ATP-binding domain maps to 96 to 267 (IPHALEGKDI…RASLHNPVRV (172 aa)). 109–116 (AQTGSGKT) contributes to the ATP binding site. The DEAD box signature appears at 215 to 218 (DEAD). In terms of domain architecture, Helicase C-terminal spans 294–438 (YLIHLLNEFL…KDPSPSKAVL (145 aa)). Residues 452 to 477 (AIRQTKDFHEKRNPKKNRDDRDREER) are disordered.

The protein belongs to the DEAD box helicase family. DDX47/RRP3 subfamily. In terms of assembly, interacts with the SSU processome.

Its subcellular location is the nucleus. The catalysed reaction is ATP + H2O = ADP + phosphate + H(+). Functionally, ATP-dependent rRNA helicase required for pre-ribosomal RNA processing. Involved in the maturation of the 35S-pre-rRNA and to its cleavage to mature 18S rRNA. The chain is ATP-dependent rRNA helicase RRP3 from Debaryomyces hansenii (strain ATCC 36239 / CBS 767 / BCRC 21394 / JCM 1990 / NBRC 0083 / IGC 2968) (Yeast).